A 914-amino-acid polypeptide reads, in one-letter code: Protein translocase subunit SecA (914 aa).

ATP is bound by residues Gln-87, 105-109 (GEGKT), and Asp-508. Zn(2+) is bound by residues Cys-898, Cys-900, Cys-909, and His-910.

This sequence belongs to the SecA family. In terms of assembly, monomer and homodimer. Part of the essential Sec protein translocation apparatus which comprises SecA, SecYEG and auxiliary proteins SecDF-YajC and YidC. Zn(2+) serves as cofactor.

Its subcellular location is the cell inner membrane. It localises to the cytoplasm. It catalyses the reaction ATP + H2O + cellular proteinSide 1 = ADP + phosphate + cellular proteinSide 2.. Functionally, part of the Sec protein translocase complex. Interacts with the SecYEG preprotein conducting channel. Has a central role in coupling the hydrolysis of ATP to the transfer of proteins into and across the cell membrane, serving both as a receptor for the preprotein-SecB complex and as an ATP-driven molecular motor driving the stepwise translocation of polypeptide chains across the membrane. This chain is Protein translocase subunit SecA, found in Xylella fastidiosa (strain M23).